The chain runs to 62 residues: MIPVRCFTCGKVISTVWEEYQQRKAAGEDPKEILDSLGLDRYCCRRMLLSHKETVDELYPYT.

The Zn(2+) site is built by C6, C9, C43, and C44.

The protein belongs to the archaeal Rpo10/eukaryotic RPB10 RNA polymerase subunit family. In terms of assembly, part of the RNA polymerase complex. The cofactor is Zn(2+).

Its subcellular location is the cytoplasm. The catalysed reaction is RNA(n) + a ribonucleoside 5'-triphosphate = RNA(n+1) + diphosphate. Functionally, DNA-dependent RNA polymerase (RNAP) catalyzes the transcription of DNA into RNA using the four ribonucleoside triphosphates as substrates. The sequence is that of DNA-directed RNA polymerase subunit Rpo10 from Methanocorpusculum labreanum (strain ATCC 43576 / DSM 4855 / Z).